The primary structure comprises 181 residues: Peptide deformylase 1 (181 aa).

The Fe cation site is built by Cys-106 and His-148. The active site involves Glu-149. His-152 is a Fe cation binding site.

This sequence belongs to the polypeptide deformylase family. Fe(2+) is required as a cofactor.

It catalyses the reaction N-terminal N-formyl-L-methionyl-[peptide] + H2O = N-terminal L-methionyl-[peptide] + formate. Removes the formyl group from the N-terminal Met of newly synthesized proteins. Requires at least a dipeptide for an efficient rate of reaction. N-terminal L-methionine is a prerequisite for activity but the enzyme has broad specificity at other positions. This chain is Peptide deformylase 1, found in Burkholderia multivorans (strain ATCC 17616 / 249).